A 72-amino-acid polypeptide reads, in one-letter code: Large ribosomal subunit protein uL29 (72 aa).

The protein belongs to the universal ribosomal protein uL29 family.

In Thermus thermophilus (strain ATCC BAA-163 / DSM 7039 / HB27), this protein is Large ribosomal subunit protein uL29.